The primary structure comprises 321 residues: Sporulation protein cse15 (321 aa).

Coiled coils occupy residues 37–70 (FHQK…TKEK) and 108–205 (IEEK…KEKL). Basic and acidic residues-rich tracts occupy residues 234-243 (GTKQKEKTEE) and 282-293 (AKSHTIEELKNR). Disordered regions lie at residues 234 to 253 (GTKQ…AQPN) and 274 to 293 (AHAQ…LKNR).

In Bacillus subtilis (strain 168), this protein is Sporulation protein cse15 (cse15).